Here is a 325-residue protein sequence, read N- to C-terminus: Short chain isoprenyl diphosphate synthase (325 aa).

Positions 44, 47, and 76 each coordinate isopentenyl diphosphate. Mg(2+) is bound by residues aspartate 83 and aspartate 87. Arginine 92 provides a ligand contact to an all-trans-polyprenyl diphosphate. Arginine 93 lines the isopentenyl diphosphate pocket. An all-trans-polyprenyl diphosphate contacts are provided by lysine 173, threonine 174, glutamine 211, lysine 228, and lysine 238.

It belongs to the FPP/GGPP synthase family. In terms of assembly, homodimer. Mg(2+) serves as cofactor.

The protein resides in the cytoplasm. In Methanothermobacter thermautotrophicus (strain ATCC 29096 / DSM 1053 / JCM 10044 / NBRC 100330 / Delta H) (Methanobacterium thermoautotrophicum), this protein is Short chain isoprenyl diphosphate synthase (idsA).